A 369-amino-acid chain; its full sequence is 3,7-dimethylxanthine N-methyltransferase TCS1 (369 aa).

Tyr-24 contacts S-adenosyl-L-homocysteine. Thr-31 is a caffeine binding site. The S-adenosyl-L-homocysteine site is built by Cys-66, Asn-71, Asp-103, Leu-104, Ser-138, and Phe-139. Caffeine contacts are provided by Tyr-156, His-159, and Trp-160. Asn-177 provides a ligand contact to Mg(2+). A caffeine-binding site is contributed by Arg-225. Residues Asp-263, Phe-265, and Asn-266 each contribute to the Mg(2+) site. Phe-321 lines the caffeine pocket.

This sequence belongs to the methyltransferase superfamily. Type-7 methyltransferase family. The cofactor is Mg(2+).

It carries out the reaction 1,7-dimethylxanthine + S-adenosyl-L-methionine = caffeine + S-adenosyl-L-homocysteine + H(+). The enzyme catalyses theobromine + S-adenosyl-L-methionine = caffeine + S-adenosyl-L-homocysteine + H(+). The catalysed reaction is 7-methylxanthine + S-adenosyl-L-methionine = theobromine + S-adenosyl-L-homocysteine + H(+). It participates in alkaloid biosynthesis. Involved in the biosynthesis of caffeine in cv. Puer. Involved in the biosynthesis of theacrine in cv. Kucha, a caffeine-like xanthine alkaloid with diverse beneficial biological activities including anti-depressive, sedative, and hypnotic activities, improving learning and memory, increasing exercise activity, and preventing nonalcoholic fatty liver disease. Catalyzes the conversion of 7-methylxanthine (7mX) to theobromine and of theobromine to caffeine. Has 3-N- and 1-N-methylation activity. The polypeptide is 3,7-dimethylxanthine N-methyltransferase TCS1 (Camellia sinensis var. assamica (Assam tea)).